Here is a 211-residue protein sequence, read N- to C-terminus: tRNA (guanine-N(7)-)-methyltransferase (211 aa).

Residues Glu44, Asp69, Asp96, and Asp118 each coordinate S-adenosyl-L-methionine. Asp118 is an active-site residue. Lys122 is a substrate binding site. The tract at residues 124 to 129 (KHEKRR) is interaction with RNA. Substrate-binding positions include Asp154 and 191-194 (TEYE).

Belongs to the class I-like SAM-binding methyltransferase superfamily. TrmB family.

It catalyses the reaction guanosine(46) in tRNA + S-adenosyl-L-methionine = N(7)-methylguanosine(46) in tRNA + S-adenosyl-L-homocysteine. The protein operates within tRNA modification; N(7)-methylguanine-tRNA biosynthesis. Functionally, catalyzes the formation of N(7)-methylguanine at position 46 (m7G46) in tRNA. The polypeptide is tRNA (guanine-N(7)-)-methyltransferase (Streptococcus pyogenes serotype M18 (strain MGAS8232)).